The following is a 312-amino-acid chain: Olfactory receptor 6C76 (312 aa).

Residues 1 to 23 (MKNRTSVTDFILLGLTDNPQLQV) lie on the Extracellular side of the membrane. Residue Asn-3 is glycosylated (N-linked (GlcNAc...) asparagine). A helical transmembrane segment spans residues 24–44 (VIFSFLFLTYVLSVTGNLTII). The Cytoplasmic portion of the chain corresponds to 45–57 (SLTLLDSHLKTPM). The helical transmembrane segment at 58-80 (YFFLRNFSLEISFTSVCNPRFLI) threads the bilayer. At 81 to 94 (SILTGDKSISYNAC) the chain is on the extracellular side. A disulfide bond links Cys-94 and Cys-176. Residues 95 to 115 (AAQLFFFIFLGSTEFFLLASM) traverse the membrane as a helical segment. The Cytoplasmic portion of the chain corresponds to 116–142 (SYDCYVAICKPLHYTTIMSDRICYQLI). The chain crosses the membrane as a helical span at residues 143–163 (ISSWLAGFLVIFPPLAMGLQL). Over 164 to 195 (DFCDSNVIDHFTCDSAPLLQISCTDTSTLELM) the chain is Extracellular. The chain crosses the membrane as a helical span at residues 196-216 (SFILALFTLISTLILVILSYT). The Cytoplasmic segment spans residues 217–238 (YIIRTILRIPSAQQRKKAFSTC). Residues 239 to 259 (SSHVIVVSISYGSCIFMYVKT) traverse the membrane as a helical segment. Over 260–267 (SAKEGVAL) the chain is Extracellular. A helical membrane pass occupies residues 268 to 288 (TKGVAILNTSVAPMLNPFIYT). Topologically, residues 289–312 (LRNQQVKQAFKDVLRKISHKKKKH) are cytoplasmic.

The protein belongs to the G-protein coupled receptor 1 family.

The protein localises to the cell membrane. Its function is as follows. Odorant receptor. The polypeptide is Olfactory receptor 6C76 (OR6C76) (Homo sapiens (Human)).